The primary structure comprises 212 residues: Deoxyribose-phosphate aldolase (212 aa).

D89 functions as the Proton donor/acceptor in the catalytic mechanism. K151 (schiff-base intermediate with acetaldehyde) is an active-site residue. K180 (proton donor/acceptor) is an active-site residue.

The protein belongs to the DeoC/FbaB aldolase family. DeoC type 1 subfamily.

It localises to the cytoplasm. It catalyses the reaction 2-deoxy-D-ribose 5-phosphate = D-glyceraldehyde 3-phosphate + acetaldehyde. It functions in the pathway carbohydrate degradation; 2-deoxy-D-ribose 1-phosphate degradation; D-glyceraldehyde 3-phosphate and acetaldehyde from 2-deoxy-alpha-D-ribose 1-phosphate: step 2/2. In terms of biological role, catalyzes a reversible aldol reaction between acetaldehyde and D-glyceraldehyde 3-phosphate to generate 2-deoxy-D-ribose 5-phosphate. The chain is Deoxyribose-phosphate aldolase from Clostridium botulinum (strain ATCC 19397 / Type A).